A 271-amino-acid chain; its full sequence is NH(3)-dependent NAD(+) synthetase (271 aa).

Position 43-50 (43-50) interacts with ATP; the sequence is GISGGQDS. Aspartate 49 is a Mg(2+) binding site. Arginine 137 is a binding site for deamido-NAD(+). Threonine 157 contributes to the ATP binding site. Glutamate 162 is a Mg(2+) binding site. 2 residues coordinate deamido-NAD(+): lysine 170 and aspartate 177. Residues lysine 186 and threonine 208 each contribute to the ATP site. 257-258 contacts deamido-NAD(+); it reads HK.

Belongs to the NAD synthetase family. In terms of assembly, homodimer.

The enzyme catalyses deamido-NAD(+) + NH4(+) + ATP = AMP + diphosphate + NAD(+) + H(+). Its pathway is cofactor biosynthesis; NAD(+) biosynthesis; NAD(+) from deamido-NAD(+) (ammonia route): step 1/1. Catalyzes the ATP-dependent amidation of deamido-NAD to form NAD. Uses ammonia as a nitrogen source. In Exiguobacterium sp. (strain ATCC BAA-1283 / AT1b), this protein is NH(3)-dependent NAD(+) synthetase.